The primary structure comprises 246 residues: Pyridoxine 5'-phosphate synthase (246 aa).

N12 lines the 3-amino-2-oxopropyl phosphate pocket. Position 14 to 15 (14 to 15 (DH)) interacts with 1-deoxy-D-xylulose 5-phosphate. R23 is a binding site for 3-amino-2-oxopropyl phosphate. H48 serves as the catalytic Proton acceptor. 1-deoxy-D-xylulose 5-phosphate-binding residues include R50 and H55. Catalysis depends on E75, which acts as the Proton acceptor. A 1-deoxy-D-xylulose 5-phosphate-binding site is contributed by T105. Residue H196 is the Proton donor of the active site. Residues G197 and 218–219 (GH) contribute to the 3-amino-2-oxopropyl phosphate site.

The protein belongs to the PNP synthase family. In terms of assembly, homooctamer; tetramer of dimers.

It localises to the cytoplasm. The enzyme catalyses 3-amino-2-oxopropyl phosphate + 1-deoxy-D-xylulose 5-phosphate = pyridoxine 5'-phosphate + phosphate + 2 H2O + H(+). It functions in the pathway cofactor biosynthesis; pyridoxine 5'-phosphate biosynthesis; pyridoxine 5'-phosphate from D-erythrose 4-phosphate: step 5/5. Its function is as follows. Catalyzes the complicated ring closure reaction between the two acyclic compounds 1-deoxy-D-xylulose-5-phosphate (DXP) and 3-amino-2-oxopropyl phosphate (1-amino-acetone-3-phosphate or AAP) to form pyridoxine 5'-phosphate (PNP) and inorganic phosphate. This is Pyridoxine 5'-phosphate synthase from Thioalkalivibrio sulfidiphilus (strain HL-EbGR7).